The following is a 994-amino-acid chain: MVSNPSSSTEVWINSKTSIKFPFEPYECQRIFMKNVIDVLDMKLDAALESPTGTGKTLSLLCSTLAWVQKLKESKPMDFATWQSSGAGGAEKTEDKLKNSFIPTIFYASRTHSQLEQVVHELNRTEYKWVKTTILGSREHFCINQKVKKIKESNRQAHVCRGLVSKRSCHYYNKFDALTTDKANEILEKGEAMDIEDFVKIGTQNSICPYFMSRQRSETAELILLPYNYIIDPKMRRRYKLDLKNSIVIFDEAHNLESICESNASAELSSTSIALCIEELKKVLALLVEEEENAREEADNETEAFGTQKIDLTKKLIENLRTEDLMALLEKVFTLEENFDKLFESDQLKSVPPLDGKASDGAILLETLANSGCDGNSVERFVDVLRDAISYLLSKNEEVSLTEKGDGMESVADFLLSIYSTHAQEVAAAVGDEHIKLADRVDPATVARNCKLYIRKDSGKLVIKYFCFQASISMRMLKMRGVRNVLLASGTLSPIQAFTYNMGLNFGAILENEHALKQVPVLTSIVTRGKHGGLVGSFQNRKNIEYVSDVGESLIRVMETTPQGVLVFFSSYSQMDELVEVWKKTKRGASDSPETFWEKMEKTKKIAVEPRAKEQLAAVRLRYTQGVSEPHGAALLAVCRGKVSEGIDFCDAESRAVIIVGIPYPPIHDERVVLKKMYLDDLMGRKDLTNEPQSSRDWYQMEAFRAVNQAIGRVLRHKNDFGTVVLIDTRYASAKPEMFPKWLRNTISRCDSNNCALKTARFFKERGHLIENSKSEYIKKQAKTCKSFRQVKSQSASNPKDDITDITLEDMFSPANMKIEKKEKIEPRPIKYDSSSSSVFSLPTNEDELKVKKWEQENDSQTNVSSSSDLNKRKYKAETPGNSSGQHVVSGSEPPKKRKMVLLTRETLPEKYQNALNIPTSELTKGMSLDNQKQFVATLKGYKATNMEWQEVFQRLHQIFIPDRPDLFISCSNILRSEDKMKYIRRSLGMKINY.

Residues 15-324 (SKTSIKFPFE…KLIENLRTED (310 aa)) form the Helicase ATP-binding domain. Residue 50 to 57 (SPTGTGKT) coordinates ATP. The [4Fe-4S] cluster site is built by Cys142, Cys160, Cys169, and Cys208. The DEAH box signature appears at 251-254 (DEAH). The span at 818–831 (KIEKKEKIEPRPIK) shows a compositional bias: basic and acidic residues. Residues 818–896 (KIEKKEKIEP…HVVSGSEPPK (79 aa)) form a disordered region. Polar residues predominate over residues 833–844 (DSSSSSVFSLPT). Basic and acidic residues predominate over residues 847–856 (DELKVKKWEQ). 2 stretches are compositionally biased toward polar residues: residues 859–869 (DSQTNVSSSSD) and 880–889 (PGNSSGQHVV).

Belongs to the helicase family. RAD3/XPD subfamily.

The protein resides in the nucleus. The catalysed reaction is ATP + H2O = ADP + phosphate + H(+). A probable ATP-dependent DNA helicase implicated in DNA repair and the maintenance of genomic stability. Acts as an anti-recombinase to counteract toxic recombination and limit crossover during meiosis. Regulates meiotic recombination and crossover homeostasis by physically dissociating strand invasion events and thereby promotes noncrossover repair by meiotic synthesis dependent strand annealing (SDSA) as well as disassembly of D loop recombination intermediates. The sequence is that of Regulator of telomere elongation helicase 1 homolog from Caenorhabditis briggsae.